Here is a 383-residue protein sequence, read N- to C-terminus: Heme chaperone HemW (383 aa).

Residues 1-241 (MPKLPPLSLY…LTMAGYQQYE (241 aa)) form the Radical SAM core domain. Position 10 (Y10) interacts with S-adenosyl-L-methionine. Residues C16, C20, and C23 each coordinate [4Fe-4S] cluster. S-adenosyl-L-methionine is bound by residues G70, 71 to 72 (GT), E103, Q130, R142, and D167.

The protein belongs to the anaerobic coproporphyrinogen-III oxidase family. HemW subfamily. [4Fe-4S] cluster is required as a cofactor.

It is found in the cytoplasm. Probably acts as a heme chaperone, transferring heme to an unknown acceptor. Binds one molecule of heme per monomer, possibly covalently. Binds 1 [4Fe-4S] cluster. The cluster is coordinated with 3 cysteines and an exchangeable S-adenosyl-L-methionine. This is Heme chaperone HemW from Haemophilus influenzae (strain ATCC 51907 / DSM 11121 / KW20 / Rd).